A 146-amino-acid chain; its full sequence is Large ribosomal subunit protein mL49 (146 aa).

A mitochondrion-targeting transit peptide spans 1–38 (MISSCVTRCFGRGKCLPGPATASIYQTIRCISTNSNKA).

The protein belongs to the mitochondrion-specific ribosomal protein mL49 family. In terms of assembly, component of the mitochondrial large ribosomal subunit (mt-LSU). Mature yeast 74S mitochondrial ribosomes consist of a small (37S) and a large (54S) subunit. The 37S small subunit contains a 15S ribosomal RNA (15S mt-rRNA) and 34 different proteins. The 54S large subunit contains a 21S rRNA (21S mt-rRNA) and 46 different proteins.

It is found in the mitochondrion. Functionally, component of the mitochondrial ribosome (mitoribosome), a dedicated translation machinery responsible for the synthesis of mitochondrial genome-encoded proteins, including at least some of the essential transmembrane subunits of the mitochondrial respiratory chain. The mitoribosomes are attached to the mitochondrial inner membrane and translation products are cotranslationally integrated into the membrane. The sequence is that of Large ribosomal subunit protein mL49 (IMG2) from Saccharomyces cerevisiae (strain ATCC 204508 / S288c) (Baker's yeast).